A 208-amino-acid polypeptide reads, in one-letter code: Mediator of RNA polymerase II transcription subunit 18 (208 aa).

S66 is modified (phosphoserine).

Belongs to the Mediator complex subunit 18 family. As to quaternary structure, component of the Mediator complex, which is composed of MED1, MED4, MED6, MED7, MED8, MED9, MED10, MED11, MED12, MED13, MED13L, MED14, MED15, MED16, MED17, MED18, MED19, MED20, MED21, MED22, MED23, MED24, MED25, MED26, MED27, MED29, MED30, MED31, CCNC, CDK8 and CDC2L6/CDK11. The MED12, MED13, CCNC and CDK8 subunits form a distinct module termed the CDK8 module. Mediator containing the CDK8 module is less active than Mediator lacking this module in supporting transcriptional activation. Individual preparations of the Mediator complex lacking one or more distinct subunits have been variously termed ARC, CRSP, DRIP, PC2, SMCC and TRAP.

It is found in the nucleus. Component of the Mediator complex, a coactivator involved in the regulated transcription of nearly all RNA polymerase II-dependent genes. Mediator functions as a bridge to convey information from gene-specific regulatory proteins to the basal RNA polymerase II transcription machinery. Mediator is recruited to promoters by direct interactions with regulatory proteins and serves as a scaffold for the assembly of a functional preinitiation complex with RNA polymerase II and the general transcription factors. The chain is Mediator of RNA polymerase II transcription subunit 18 (MED18) from Bos taurus (Bovine).